Reading from the N-terminus, the 156-residue chain is Cyanate hydratase (156 aa).

Residues Arg-96, Glu-99, and Ser-122 contribute to the active site.

This sequence belongs to the cyanase family.

The enzyme catalyses cyanate + hydrogencarbonate + 3 H(+) = NH4(+) + 2 CO2. In terms of biological role, catalyzes the reaction of cyanate with bicarbonate to produce ammonia and carbon dioxide. The protein is Cyanate hydratase of Pseudomonas aeruginosa (strain LESB58).